The sequence spans 346 residues: Uroporphyrinogen decarboxylase (346 aa).

Residues 21–25, F40, D71, Y146, S201, and H316 each bind substrate; that span reads RQAGR.

This sequence belongs to the uroporphyrinogen decarboxylase family. Homodimer.

The protein resides in the cytoplasm. It catalyses the reaction uroporphyrinogen III + 4 H(+) = coproporphyrinogen III + 4 CO2. It participates in porphyrin-containing compound metabolism; protoporphyrin-IX biosynthesis; coproporphyrinogen-III from 5-aminolevulinate: step 4/4. Functionally, catalyzes the decarboxylation of four acetate groups of uroporphyrinogen-III to yield coproporphyrinogen-III. The protein is Uroporphyrinogen decarboxylase of Rickettsia conorii (strain ATCC VR-613 / Malish 7).